We begin with the raw amino-acid sequence, 282 residues long: Pantothenate synthetase (282 aa).

26 to 33 (MGNLHEGH) provides a ligand contact to ATP. H33 serves as the catalytic Proton donor. A (R)-pantoate-binding site is contributed by Q57. Q57 contacts beta-alanine. Residue 144 to 147 (GKKD) participates in ATP binding. (R)-pantoate is bound at residue Q150. ATP contacts are provided by residues I173 and 181-184 (LSSR).

This sequence belongs to the pantothenate synthetase family. As to quaternary structure, homodimer.

It localises to the cytoplasm. It carries out the reaction (R)-pantoate + beta-alanine + ATP = (R)-pantothenate + AMP + diphosphate + H(+). The protein operates within cofactor biosynthesis; (R)-pantothenate biosynthesis; (R)-pantothenate from (R)-pantoate and beta-alanine: step 1/1. In terms of biological role, catalyzes the condensation of pantoate with beta-alanine in an ATP-dependent reaction via a pantoyl-adenylate intermediate. The protein is Pantothenate synthetase of Cupriavidus necator (strain ATCC 17699 / DSM 428 / KCTC 22496 / NCIMB 10442 / H16 / Stanier 337) (Ralstonia eutropha).